The sequence spans 30 residues: Photosystem I reaction center subunit XII (30 aa).

Residues 7–26 (IFVALLFALVSAVLAIRLGK) traverse the membrane as a helical segment.

It belongs to the PsaM family.

It localises to the plastid. The protein localises to the chloroplast thylakoid membrane. In Porphyra purpurea (Red seaweed), this protein is Photosystem I reaction center subunit XII.